The primary structure comprises 227 residues: SPbeta prophage-derived uncharacterized membrane protein YomJ (227 aa).

Helical transmembrane passes span 16-36 and 131-151; these read LFFLLMDGWRGMGICLIIVGL and GIVAGGLLAGGIGAAIGGLSA.

The protein localises to the cell membrane. This is SPbeta prophage-derived uncharacterized membrane protein YomJ (yomJ) from Bacillus subtilis (strain 168).